The following is a 237-amino-acid chain: Cytosolic-abundant heat soluble protein 86272 (237 aa).

The disordered stretch occupies residues 96–125; the sequence is FKDQEKYSREQAAIARAHDKDLEKKTEEYR. A compositionally biased stretch (basic and acidic residues) spans 111 to 125; the sequence is RAHDKDLEKKTEEYR. The stretch at 115–193 forms a coiled coil; it reads KDLEKKTEEY…MNALEQSKMA (79 aa). CAHS motif stretches follow at residues 124-142 and 161-179; these read YRKT…LEKQ and QKRE…LEHE. Residues 204-215 show a composition bias toward low complexity; it reads AGTTVSGGTTVS. The interval 204 to 237 is disordered; the sequence is AGTTVSGGTTVSEHTEVHDGKEKKSLGEKIKSLF. The span at 216-237 shows a compositional bias: basic and acidic residues; the sequence is EHTEVHDGKEKKSLGEKIKSLF.

It belongs to the Cytosolic-abundant heat soluble protein (CAHS) family.

Its subcellular location is the cytoplasm. Functionally, CAHS proteins are cytosolic heat soluble proteins that seem to contribute to the anhydrobiosis in tardigrades, but their specific mechanisms are yet to be identified. It is possible that protection during anhydrobiosis might occur via the stabilization of vitrifying small molecules such as sugars, but not via the direct glass transition of CAHS proteins themselves. This Hypsibius exemplaris (Freshwater tardigrade) protein is Cytosolic-abundant heat soluble protein 86272.